A 329-amino-acid chain; its full sequence is Homeobox protein Nkx-3.2 (329 aa).

Residues 107 to 188 (GLGSPCGGAP…PDPSPPDEDP (82 aa)) form a disordered region. Gly residues predominate over residues 110-124 (SPCGGAPGAGAGGEP). Residues 138–160 (ELGRPGDIGERKKQRPLEARAKG) show a composition bias toward basic and acidic residues. A DNA-binding region (homeobox) is located at residues 202-261 (KKRSRAAFSHAQVFELERRFNHQRYLSGPERADLAASLKLTETQVKIWFQNRRYKTKRRQ).

It belongs to the NK-3 homeobox family. As to expression, first expressed in developing facial cartilage in early tailbud embryos, with expression localized to the basihyobranchial, palatoquadrate and possibly Meckel's cartilages. Shortly after, a second area of expression is seen in the musculature of the anterior gut. During late embryogenesis, gut expression extends into hindgut tissues. In adults, expressed at a high level in the kidney, pancreas, spleen and stomach and at a slightly lower level in the intestine, skeletal muscle and tongue. Adult heart, liver and lung show little or no expression.

It is found in the nucleus. In Xenopus laevis (African clawed frog), this protein is Homeobox protein Nkx-3.2 (nkx3-2).